The chain runs to 71 residues: Large ribosomal subunit protein uL29 (71 aa).

This sequence belongs to the universal ribosomal protein uL29 family.

The polypeptide is Large ribosomal subunit protein uL29 (Methanocella arvoryzae (strain DSM 22066 / NBRC 105507 / MRE50)).